Reading from the N-terminus, the 1335-residue chain is Aldehyde oxidase 3 (1335 aa).

In terms of domain architecture, 2Fe-2S ferredoxin-type spans 8 to 95 (DELIFFVNGK…GAAVTTVEGI (88 aa)). [2Fe-2S] cluster-binding residues include C47, C52, C55, and C77. Q116 serves as a coordination point for Mo-molybdopterin. Residues C117, C120, C152, and C154 each coordinate [2Fe-2S] cluster. An FAD-binding PCMH-type domain is found at 236-421 (FRGERTTWIA…ISVFVPRSSK (186 aa)). 264 to 271 (LVIGNTYL) serves as a coordination point for FAD. The residue at position 320 (S320) is a Phosphoserine. FAD-binding residues include S354, H358, D367, and L411. Residues A802, L1043, and Q1199 each coordinate Mo-molybdopterin. The active-site Proton acceptor; for azaheterocycle hydroxylase activity is the E1266.

This sequence belongs to the xanthine dehydrogenase family. Homodimer. [2Fe-2S] cluster serves as cofactor. It depends on FAD as a cofactor. Mo-molybdopterin is required as a cofactor. In terms of tissue distribution, highly expressed in liver (at protein level). In liver, the expression is greater in males than females.

It is found in the cytoplasm. The enzyme catalyses an aldehyde + O2 + H2O = a carboxylate + H2O2 + H(+). With respect to regulation, inhibited by potassium cyanide, menadione, benzamidine, raloxifene and norharmane. Its function is as follows. Oxidase with broad substrate specificity, oxidizing aromatic azaheterocycles, such as N1-methylnicotinamide and phthalazine, as well as aldehydes, such as benzaldehyde, retinal and pyridoxal. Plays a key role in the metabolism of xenobiotics and drugs containing aromatic azaheterocyclic substituents. Is probably involved in the regulation of reactive oxygen species homeostasis. May be a prominent source of superoxide generation via the one-electron reduction of molecular oxygen. May also catalyze nitric oxide (NO) production via the reduction of nitrite to NO with NADH or aldehyde as electron donor. This is Aldehyde oxidase 3 (Aox3) from Mus musculus (Mouse).